Here is a 144-residue protein sequence, read N- to C-terminus: Grifin (144 aa).

Residues 5-133 (FEAFCAGGLA…EHRLAQVELA (129 aa)) form the Galectin domain. Ser-138 carries the phosphoserine modification.

As to quaternary structure, homodimer.

This chain is Grifin (Grifin), found in Mus musculus (Mouse).